A 225-amino-acid polypeptide reads, in one-letter code: Uridylate kinase (225 aa).

ATP is bound at residue 9–10; it reads GS. G44 lines the UMP pocket. Residues G45 and R49 each contribute to the ATP site. UMP contacts are provided by residues D66 and 114 to 120; that span reads THPGHTT. ATP contacts are provided by T140, N141, Y146, and D149.

It belongs to the UMP kinase family. Homohexamer.

It is found in the cytoplasm. The catalysed reaction is UMP + ATP = UDP + ADP. It participates in pyrimidine metabolism; CTP biosynthesis via de novo pathway; UDP from UMP (UMPK route): step 1/1. With respect to regulation, inhibited by UTP. In terms of biological role, catalyzes the reversible phosphorylation of UMP to UDP. The polypeptide is Uridylate kinase (Pyrococcus abyssi (strain GE5 / Orsay)).